Consider the following 183-residue polypeptide: MSIEIANESGVEVPEPSIVSVARFALDKMSVSQLAELSIVLVELDVMSDLHERWMDLPGPTDVMAFPMDEYDSSRRPDSAGAGPALLGDIVLCPAFAKDQARKAGHSLLDELHLLTVHGVLHLLGYDHAEPEEEREMFGLQNQILADFRAAKAAAEREQAQRSADSAVLGAVGLEEQDGPGTH.

Histidine 118, histidine 122, and histidine 128 together coordinate Zn(2+). Residues 156 to 183 (EREQAQRSADSAVLGAVGLEEQDGPGTH) are disordered.

It belongs to the endoribonuclease YbeY family. Zn(2+) is required as a cofactor.

Its subcellular location is the cytoplasm. Its function is as follows. Single strand-specific metallo-endoribonuclease involved in late-stage 70S ribosome quality control and in maturation of the 3' terminus of the 16S rRNA. The protein is Endoribonuclease YbeY of Saccharopolyspora erythraea (strain ATCC 11635 / DSM 40517 / JCM 4748 / NBRC 13426 / NCIMB 8594 / NRRL 2338).